Here is a 195-residue protein sequence, read N- to C-terminus: Peptidyl-tRNA hydrolase (195 aa).

Tyr17 is a tRNA binding site. His22 acts as the Proton acceptor in catalysis. Tyr68, Asn70, and Asn116 together coordinate tRNA.

Belongs to the PTH family. Monomer.

The protein resides in the cytoplasm. It catalyses the reaction an N-acyl-L-alpha-aminoacyl-tRNA + H2O = an N-acyl-L-amino acid + a tRNA + H(+). Functionally, hydrolyzes ribosome-free peptidyl-tRNAs (with 1 or more amino acids incorporated), which drop off the ribosome during protein synthesis, or as a result of ribosome stalling. In terms of biological role, catalyzes the release of premature peptidyl moieties from peptidyl-tRNA molecules trapped in stalled 50S ribosomal subunits, and thus maintains levels of free tRNAs and 50S ribosomes. The chain is Peptidyl-tRNA hydrolase from Shewanella frigidimarina (strain NCIMB 400).